We begin with the raw amino-acid sequence, 75 residues long: Caerin 1.11 (75 aa).

The first 22 residues, 1–22 (MASLKKSLFLVLFLGFVSVSIC), serve as a signal peptide directing secretion. Positions 23–49 (EEEKRQEDEDEHEEEGENQEEGSEEKR) are excised as a propeptide. The tract at residues 24 to 48 (EEKRQEDEDEHEEEGENQEEGSEEK) is disordered. Acidic residues predominate over residues 30-45 (DEDEHEEEGENQEEGS). The residue at position 74 (L74) is a Leucine amide.

It belongs to the frog skin active peptide (FSAP) family. Caerin subfamily. In terms of tissue distribution, expressed by the skin glands.

The protein localises to the secreted. The protein resides in the target cell membrane. Cationic amphipathic alpha-helical antimicrobial peptide with weak or no activity against both Gram-positive and Gram-negative bacteria. Is weakly active against E.coli (MIC=25 uM), E.cloacae (MIC=50 uM), K.pneumoniae (MIC=25 uM), and S.haemolyticus (MIC=50 uM). Has no activity against S.typhimurium, S.enteritidis, B.megaterium, and S.aureus (MIC&gt;100 uM). In Ranoidea caerulea (Green tree frog), this protein is Caerin 1.11.